The chain runs to 200 residues: NAD(P)H dehydrogenase (quinone) (200 aa).

Residues 4–191 (VLVLYYSSYG…DIARYQGKHV (188 aa)) enclose the Flavodoxin-like domain. FMN contacts are provided by residues 10 to 15 (SSYGHV) and 79 to 81 (TRF). Tyr12 is an NAD(+) binding site. Substrate is bound at residue Trp99. Residues 114–120 (STGTQHG) and His135 each bind FMN.

Belongs to the WrbA family. FMN serves as cofactor.

The enzyme catalyses a quinone + NADH + H(+) = a quinol + NAD(+). It catalyses the reaction a quinone + NADPH + H(+) = a quinol + NADP(+). The polypeptide is NAD(P)H dehydrogenase (quinone) (Burkholderia ambifaria (strain MC40-6)).